We begin with the raw amino-acid sequence, 236 residues long: tRNA (guanine-N(7)-)-methyltransferase (236 aa).

Positions 43, 68, 102, and 125 each coordinate S-adenosyl-L-methionine. 2 residues coordinate substrate: K129 and D161.

This sequence belongs to the class I-like SAM-binding methyltransferase superfamily. TrmB family.

The enzyme catalyses guanosine(46) in tRNA + S-adenosyl-L-methionine = N(7)-methylguanosine(46) in tRNA + S-adenosyl-L-homocysteine. Its pathway is tRNA modification; N(7)-methylguanine-tRNA biosynthesis. Catalyzes the formation of N(7)-methylguanine at position 46 (m7G46) in tRNA. This chain is tRNA (guanine-N(7)-)-methyltransferase, found in Ruminiclostridium cellulolyticum (strain ATCC 35319 / DSM 5812 / JCM 6584 / H10) (Clostridium cellulolyticum).